The chain runs to 452 residues: MKKTLRFAAVVSSLAASAALLVAAPAAAQALGSQGAQLADEVVAVVNNDVITGRELDQRVGLIARRLQQQNAPVPPADQLRAQVLNQMVLERIQVQKAKDDGIRIDDATVQATLQRLAQANGMTLDQYRGRLEAQGVPWSIFTNDARTELMLSKLREREVDGKITVSDAEVANYIASQRGPNASQQQDLRFQHIFIKAPTNAPQADIEAAQKKADALLQQAKSGADFERLAKNNSEANDAKKGGDLGFKSPSALPADVVDAASKLRPGQVNPTLIRVPDGFEIVRLVDRRQSQGASAAAPKIVQTHVRHILLRVGEGKSEGQARQQLVDIRNQVEAGGDFAKFARTYSQDGSASQGGDLGWISPGETVPEFERAMNNLQDGQISQPIRTEYGYHLIQVLNRREAEGSVQQQMDIARQAIGQRKAEQAYADWLRELRDSSYVQYKIGGVGPAN.

The signal sequence occupies residues 1 to 28 (MKKTLRFAAVVSSLAASAALLVAAPAAA). 2 consecutive PpiC domains span residues 186–288 (QQDL…RLVD) and 302–400 (IVQT…QVLN).

The protein localises to the periplasm. The catalysed reaction is [protein]-peptidylproline (omega=180) = [protein]-peptidylproline (omega=0). Chaperone involved in the correct folding and assembly of outer membrane proteins. Recognizes specific patterns of aromatic residues and the orientation of their side chains, which are found more frequently in integral outer membrane proteins. May act in both early periplasmic and late outer membrane-associated steps of protein maturation. The protein is Chaperone SurA of Burkholderia orbicola (strain AU 1054).